The following is a 1119-amino-acid chain: MSVRGIRIWRRNDARFQPSILVEKNGLDGSLLFQGGAIATLDSDSTDVERRSYQKIVDAYGILGVLAITKDEAVLVAVTGVLSVGQLYGADILKITNVEFISLRTFGSVENVDSRIIDLQRLLSSQMFYFSSLQSYDLTRSAQHRDSHDCSDARFFWNRSLHFSFQRYGIDTDNWLLKCMAGSVLVRVVYVGANTGRVALISRLSCERVGTRFNVRGANYLGNVANFVETEQLLLFDEKECSLLQIRGSIPLFWEQPGVNVGSHKVKLRAFETSLPAYHRHLSQLQHRYGEFAIVNLLGRKEGERVLGDAFKTQHKSSHFAPLVDFIDFDYHAQMKISKEAIVQLKKKMSPHMTKHGFFYSMGKEIVKRQTGVIRTNCLDCLDRTNAVQTAIGLQMSHDQVAFLNLNAGKVNVEQRVEEILRDLWQKNGDQCSTIYAGTGALDGKSKLKDASRSLARTIQNNLMDGAKQESFDLFLTGAAYDPRLFDRACNILPPSLIQESYYYHEYADAVSQLVERSPEIAEPQSIKIFVGTWNVNGGKNIHNVAFRNESSLSHWIFANSMTRLVSVEDEQLADIVAIGVEELVDLNASNMVKASTTNQRMWCESIRKTLSEKAPFVLIGSEQLVGVCLFLFARPRVSPYLKDFAVASVKTGMGGATGNKGSVAFRIVVFSTSICFICSHFAAGQNEIRDRNEDFATTLKKIRFPLGREIDSHDVIFWLGDFNYRINLSGDEVKNAVRNGDYAKLVENDQLTQQKALGQTFVGFNEGQLTFAPTYKYDTFSDDYDTSEKCRAPAWTDRILWKDQRKKGKTQLLSYDRSELKTSDHRPVGAVFKVETFKVGGRKCVELIEDVVESMGPPDGTIIVSIAGKPRFPPQMFPPIHEKLKELGAQVQLSKFDDGDLWIVLNSGEMALAALSMDGLKIGGTDQINVKLKSPDWAYALKPHLSDFDLESFEVTAEEEALLGGTDGAVFEFADEDEDAISVSSLTLTGSAPDRPRPPSARSEAISVAKLEWPTEQPNVLSTSMPTRASSASLANSSWYEHVPPLAPPQSNNNKSPPQACLFNPFTQSAPSPAPPPSTIPLPPTRGASVGPGPPAVPVRKAPPPPPRPVIPPRPKNM.

An SAC domain is found at 119 to 438 (LQRLLSSQMF…GDQCSTIYAG (320 aa)). The interval 532-826 (GTWNVNGGKN…DRSELKTSDH (295 aa)) is catalytic. 2 disordered regions span residues 986–1005 (SLTL…ARSE) and 1042–1119 (EHVP…PKNM). A compositionally biased stretch (low complexity) spans 1050–1072 (PQSNNNKSPPQACLFNPFTQSAP). Composition is skewed to pro residues over residues 1073–1085 (SPAP…PLPP) and 1093–1119 (PGPP…PKNM).

It belongs to the synaptojanin family. This sequence in the central section; belongs to the inositol 1,4,5-trisphosphate 5-phosphatase family.

Its subcellular location is the cytoplasmic vesicle. The protein localises to the secretory vesicle. It is found in the synaptic vesicle. It localises to the synapse. The catalysed reaction is a 1,2-diacyl-sn-glycero-3-phospho-(1D-myo-inositol-4,5-bisphosphate) + H2O = a 1,2-diacyl-sn-glycero-3-phospho-(1D-myo-inositol 4-phosphate) + phosphate. Functionally, probable inositol 5-phosphatase which regulates synaptic vesicle recycling in neurons by regulating clathrin-mediated endocytosis. The sequence is that of Synaptojanin from Caenorhabditis elegans.